A 195-amino-acid polypeptide reads, in one-letter code: Cytochrome c oxidase assembly protein CtaG (195 aa).

Over 1-7 (MSGGKPR) the chain is Cytoplasmic. A helical; Signal-anchor for type II membrane protein transmembrane segment spans residues 8–30 (SNTRTVAMLAGVVVLMGALSWAA). The Periplasmic segment spans residues 31-195 (VPFYSWFCKV…LDAKTEPTVN (165 aa)).

This sequence belongs to the COX11/CtaG family.

Its subcellular location is the cell inner membrane. Functionally, exerts its effect at some terminal stage of cytochrome c oxidase synthesis, probably by being involved in the insertion of the copper B into subunit I. In Paracoccus denitrificans (strain Pd 1222), this protein is Cytochrome c oxidase assembly protein CtaG.